Consider the following 2185-residue polypeptide: Genome polyprotein (2185 aa).

Gly-2 is lipidated: N-myristoyl glycine; by host. Over 2–1495 (GAQVSTQKTG…HVSRAFICLQ (1494 aa)) the chain is Cytoplasmic. Residues 568–584 (FFQGPVEDAITAAIGRV) are amphipathic alpha-helix. Catalysis depends on for protease 2A activity residues His-872 and Asp-890. Residues Cys-907 and Cys-909 each contribute to the Zn(2+) site. Cys-961 serves as the catalytic For protease 2A activity. Residues Cys-967 and His-969 each contribute to the Zn(2+) site. The interval 1101–1173 (NNGWLKKFTE…EQSAPSQSDQ (73 aa)) is membrane-binding. The tract at residues 1101–1239 (NNGWLKKFTE…SPGAGKSVAT (139 aa)) is oligomerization. The RNA-binding stretch occupies residues 1122–1126 (AIKIQ). One can recognise an SF3 helicase domain in the interval 1205 to 1361 (EKKMSNYIQF…SMYSQNGKIN (157 aa)). The Zn(2+) site is built by Cys-1369, Cys-1381, and Cys-1386. The C4-type; degenerate zinc-finger motif lies at 1369–1386 (CDEECCPVNFKKCCPLVC). An RNA-binding region spans residues 1413–1420 (EYNHRHSV). An oligomerization region spans residues 1424–1429 (LEALFQ). The stretch at 1496 to 1511 (AITTFVSVAGIIYIIY) is an intramembrane region. The Cytoplasmic segment spans residues 1512 to 2185 (KLFAGFQGAY…TIRRKWLDSF (674 aa)). Residue Tyr-1521 is modified to O-(5'-phospho-RNA)-tyrosine. In terms of domain architecture, Peptidase C3 spans 1541–1719 (GPAFEFAVAM…FSAALLKHYF (179 aa)). Active-site for protease 3C activity residues include His-1580, Glu-1611, and Cys-1687. The 117-residue stretch at 1950–2066 (GHLIAFDYSG…SYPWPIDASL (117 aa)) folds into the RdRp catalytic domain. Residues Asp-1956 and Asp-2052 each contribute to the Mg(2+) site.

The protein belongs to the picornaviruses polyprotein family. As to quaternary structure, interacts with capsid protein VP1 and capsid protein VP3 to form heterotrimeric protomers. Interacts with capsid protein VP0, and capsid protein VP3 to form heterotrimeric protomers. Five protomers subsequently associate to form pentamers which serve as building blocks for the capsid. Interacts with capsid protein VP2, capsid protein VP3 and capsid protein VP4 following cleavage of capsid protein VP0. Interacts with host CD55. Interacts with host CXADR. In terms of assembly, interacts with capsid protein VP1 and capsid protein VP3 in the mature capsid. As to quaternary structure, interacts with capsid protein VP0 and capsid protein VP1 to form heterotrimeric protomers. Five protomers subsequently associate to form pentamers which serve as building blocks for the capsid. Interacts with capsid protein VP4 in the mature capsid. Interacts with protein 2C; this interaction may be important for virion morphogenesis. Interacts with capsid protein VP1 and capsid protein VP3. In terms of assembly, homodimer. As to quaternary structure, homohexamer; forms a hexameric ring structure with 6-fold symmetry characteristic of AAA+ ATPases. Interacts (via N-terminus) with host RTN3 (via reticulon domain); this interaction is important for viral replication. Interacts with capsid protein VP3; this interaction may be important for virion morphogenesis. Interacts with protein 3CD. In terms of assembly, homodimer. Interacts with host GBF1. Interacts (via GOLD domain) with host ACBD3 (via GOLD domain); this interaction allows the formation of a viral protein 3A/ACBD3 heterotetramer with a 2:2 stoichiometry, which will stimulate the recruitment of host PI4KB in order to synthesize PI4P at the viral RNA replication sites. As to quaternary structure, interacts with RNA-directed RNA polymerase. Interacts with host TICAM1 (via C-terminus). In terms of assembly, interacts with protein 3AB and with RNA-directed RNA polymerase. As to quaternary structure, interacts with Viral protein genome-linked and with protein 3CD. Requires Mg(2+) as cofactor. Specific enzymatic cleavages in vivo by the viral proteases yield processing intermediates and the mature proteins. Post-translationally, myristoylation is required for the formation of pentamers during virus assembly. Further assembly of 12 pentamers and a molecule of genomic RNA generates the provirion. In terms of processing, during virion maturation, immature virions are rendered infectious following cleavage of VP0 into VP4 and VP2. This maturation seems to be an autocatalytic event triggered by the presence of RNA in the capsid and it is followed by a conformational change infectious virion. Myristoylation is required during RNA encapsidation and formation of the mature virus particle. Post-translationally, VPg is uridylylated by the polymerase into VPg-pUpU. This acts as a nucleotide-peptide primer for the genomic RNA replication.

The protein localises to the virion. It localises to the host cytoplasm. Its subcellular location is the host cytoplasmic vesicle membrane. The protein resides in the host nucleus. The catalysed reaction is a ribonucleoside 5'-triphosphate + H2O = a ribonucleoside 5'-diphosphate + phosphate + H(+). It carries out the reaction Selective cleavage of Tyr-|-Gly bond in the picornavirus polyprotein.. It catalyses the reaction RNA(n) + a ribonucleoside 5'-triphosphate = RNA(n+1) + diphosphate. The enzyme catalyses Selective cleavage of Gln-|-Gly bond in the poliovirus polyprotein. In other picornavirus reactions Glu may be substituted for Gln, and Ser or Thr for Gly.. Replication or transcription is subject to high level of random mutations by the nucleotide analog ribavirin. Forms an icosahedral capsid of pseudo T=3 symmetry with capsid proteins VP2 and VP3. The capsid is 300 Angstroms in diameter, composed of 60 copies of each capsid protein and enclosing the viral positive strand RNA genome. Capsid protein VP1 mainly forms the vertices of the capsid. Capsid protein VP1 interacts with host cell receptors CD55 and CXADR to provide virion attachment to target host cells. This attachment induces virion internalization. Tyrosine kinases are probably involved in the entry process. After binding to its receptor, the capsid undergoes conformational changes. Capsid protein VP1 N-terminus (that contains an amphipathic alpha-helix) and capsid protein VP4 are externalized. Together, they shape a pore in the host membrane through which viral genome is translocated to host cell cytoplasm. Functionally, forms an icosahedral capsid of pseudo T=3 symmetry with capsid proteins VP2 and VP3. The capsid is 300 Angstroms in diameter, composed of 60 copies of each capsid protein and enclosing the viral positive strand RNA genome. Its function is as follows. Lies on the inner surface of the capsid shell. After binding to the host receptor, the capsid undergoes conformational changes. Capsid protein VP4 is released, Capsid protein VP1 N-terminus is externalized, and together, they shape a pore in the host membrane through which the viral genome is translocated into the host cell cytoplasm. In terms of biological role, component of immature procapsids, which is cleaved into capsid proteins VP4 and VP2 after maturation. Allows the capsid to remain inactive before the maturation step. Cysteine protease that cleaves viral polyprotein and specific host proteins. It is responsible for the autocatalytic cleavage between the P1 and P2 regions, which is the first cleavage occurring in the polyprotein. Also cleaves the host translation initiation factor EIF4G1, in order to shut down the capped cellular mRNA translation. Inhibits the host nucleus-cytoplasm protein and RNA trafficking by cleaving host members of the nuclear pores. Counteracts stress granule formation probably by antagonizing its assembly or promoting its dissassembly. Cleaves and inhibits host IFIH1/MDA5, thereby inhibiting the type-I IFN production and the establishment of the antiviral state. Cleaves and inhibits host MAVS, thereby inhibiting the type-I IFN production and the establishment of the antiviral state. Functionally, plays an essential role in the virus replication cycle by acting as a viroporin. Creates a pore in the host endoplasmic reticulum and as a consequence releases Ca2+ in the cytoplasm of infected cell. In turn, high levels of cytoplasmic calcium may trigger membrane trafficking and transport of viral ER-associated proteins to viroplasms, sites of viral genome replication. Its function is as follows. Induces and associates with structural rearrangements of intracellular membranes. Displays RNA-binding, nucleotide binding and NTPase activities. May play a role in virion morphogenesis and viral RNA encapsidation by interacting with the capsid protein VP3. In terms of biological role, localizes the viral replication complex to the surface of membranous vesicles. Together with protein 3CD binds the Cis-Active RNA Element (CRE) which is involved in RNA synthesis initiation. Acts as a cofactor to stimulate the activity of 3D polymerase, maybe through a nucleid acid chaperone activity. Localizes the viral replication complex to the surface of membranous vesicles. It inhibits host cell endoplasmic reticulum-to-Golgi apparatus transport and causes the disassembly of the Golgi complex, possibly through GBF1 interaction. This would result in depletion of MHC, trail receptors and IFN receptors at the host cell surface. Plays an essential role in viral RNA replication by recruiting ACBD3 and PI4KB at the viral replication sites, thereby allowing the formation of the rearranged membranous structures where viral replication takes place. Functionally, acts as a primer for viral RNA replication and remains covalently bound to viral genomic RNA. VPg is uridylylated prior to priming replication into VPg-pUpU. The oriI viral genomic sequence may act as a template for this. The VPg-pUpU is then used as primer on the genomic RNA poly(A) by the RNA-dependent RNA polymerase to replicate the viral genome. During genome replication, the VPg-RNA linkage is removed by the host TDP2, thereby accelerating replication. During the late stage of the replication cycle, host TDP2 is excluded from sites of viral RNA synthesis and encapsidation, allowing for the generation of progeny virions. Its function is as follows. Involved in the viral replication complex and viral polypeptide maturation. It exhibits protease activity with a specificity and catalytic efficiency that is different from protease 3C. Protein 3CD lacks polymerase activity. Protein 3CD binds to the 5'UTR of the viral genome. In terms of biological role, major viral protease that mediates proteolytic processing of the polyprotein. Cleaves host EIF5B, contributing to host translation shutoff. Also cleaves host PABPC1, contributing to host translation shutoff. Cleaves and inhibits host RIGI, thereby inhibiting the type-I IFN production and the establishment of the antiviral state. Cleaves and inhibits host MAVS, thereby inhibiting the type-I IFN production and the establishment of the antiviral state. Cleaves and inhibits host TICAM1/TRIF, thereby inhibiting the type-I IFN production. Cleaves host NLRP1, triggers host N-glycine-mediated degradation of the autoinhibitory NLRP1 N-terminal fragment. Replicates the viral genomic RNA on the surface of intracellular membranes. May form linear arrays of subunits that propagate along a strong head-to-tail interaction called interface-I. Covalently attaches UMP to a tyrosine of VPg, which is used to prime RNA synthesis. The positive stranded RNA genome is first replicated at virus induced membranous vesicles, creating a dsRNA genomic replication form. This dsRNA is then used as template to synthesize positive stranded RNA genomes. ss(+)RNA genomes are either translated, replicated or encapsidated. The chain is Genome polyprotein from Homo sapiens (Human).